Reading from the N-terminus, the 274-residue chain is Bis(5'-nucleosyl)-tetraphosphatase, symmetrical (274 aa).

This sequence belongs to the Ap4A hydrolase family.

It catalyses the reaction P(1),P(4)-bis(5'-adenosyl) tetraphosphate + H2O = 2 ADP + 2 H(+). Hydrolyzes diadenosine 5',5'''-P1,P4-tetraphosphate to yield ADP. The polypeptide is Bis(5'-nucleosyl)-tetraphosphatase, symmetrical (Erwinia tasmaniensis (strain DSM 17950 / CFBP 7177 / CIP 109463 / NCPPB 4357 / Et1/99)).